A 394-amino-acid chain; its full sequence is MTPRVLGLMSGTSADGIDAALLELPGWPPTGSGGIFPALSGGVPRGRVAEHVFTPFPPELREAVLAAMQSGLDAADLTQLHWWLGEALAEAAAPLAPHADLIASHGQTVQHHPRPDPRRGWTRPATLQLGEVALIAERTGKPVVADFRPADMAAGGLGAPLVPFADWALFAEGGVRRAIHNLGGISNLTFLPGLDRDEVQAFDTGPGNCLLDEVAALAGQACDEGGRLAAAGQVHTETLAAWLAHPELQVPPPKATGREVWTLARLPRPADLGLPDLAATATAFTARTVADAYARWVVPQGLDEVVVAGGGARNPALLAAIRSALSPLPLRTFTEVGWAAQGLTDATREAAAFAFLGYARAQGWANTLPRTTGARHAVSAGKWLLPPSLPETLA.

Residue 11-18 participates in ATP binding; it reads GTSADGID.

This sequence belongs to the anhydro-N-acetylmuramic acid kinase family.

It carries out the reaction 1,6-anhydro-N-acetyl-beta-muramate + ATP + H2O = N-acetyl-D-muramate 6-phosphate + ADP + H(+). It participates in amino-sugar metabolism; 1,6-anhydro-N-acetylmuramate degradation. Its pathway is cell wall biogenesis; peptidoglycan recycling. Catalyzes the specific phosphorylation of 1,6-anhydro-N-acetylmuramic acid (anhMurNAc) with the simultaneous cleavage of the 1,6-anhydro ring, generating MurNAc-6-P. Is required for the utilization of anhMurNAc either imported from the medium or derived from its own cell wall murein, and thus plays a role in cell wall recycling. This is Anhydro-N-acetylmuramic acid kinase from Deinococcus geothermalis (strain DSM 11300 / CIP 105573 / AG-3a).